Consider the following 130-residue polypeptide: Small ribosomal subunit protein uS8 (130 aa).

It belongs to the universal ribosomal protein uS8 family. As to quaternary structure, part of the 30S ribosomal subunit.

In terms of biological role, one of the primary rRNA binding proteins, it binds directly to 16S rRNA central domain where it helps coordinate assembly of the platform of the 30S subunit. The sequence is that of Small ribosomal subunit protein uS8 from Methanosarcina barkeri (strain Fusaro / DSM 804).